Here is a 328-residue protein sequence, read N- to C-terminus: Malate dehydrogenase (328 aa).

12-18 (GAAGQIG) serves as a coordination point for NAD(+). Residues R95 and R101 each contribute to the substrate site. Residues N108, Q115, and 132–134 (VGN) contribute to the NAD(+) site. Positions 134 and 165 each coordinate substrate. H190 serves as the catalytic Proton acceptor.

It belongs to the LDH/MDH superfamily. MDH type 2 family.

It carries out the reaction (S)-malate + NAD(+) = oxaloacetate + NADH + H(+). Functionally, catalyzes the reversible oxidation of malate to oxaloacetate. The sequence is that of Malate dehydrogenase from Leptothrix cholodnii (strain ATCC 51168 / LMG 8142 / SP-6) (Leptothrix discophora (strain SP-6)).